We begin with the raw amino-acid sequence, 290 residues long: Diaminopimelate epimerase (290 aa).

Substrate is bound by residues N14 and N67. Catalysis depends on C76, which acts as the Proton donor. Substrate-binding positions include 77–78 (GN), N166, N199, and 217–218 (ER). C226 (proton acceptor) is an active-site residue. Residue 227-228 (GT) coordinates substrate.

It belongs to the diaminopimelate epimerase family. Homodimer.

The protein localises to the cytoplasm. The enzyme catalyses (2S,6S)-2,6-diaminopimelate = meso-2,6-diaminopimelate. It participates in amino-acid biosynthesis; L-lysine biosynthesis via DAP pathway; DL-2,6-diaminopimelate from LL-2,6-diaminopimelate: step 1/1. In terms of biological role, catalyzes the stereoinversion of LL-2,6-diaminopimelate (L,L-DAP) to meso-diaminopimelate (meso-DAP), a precursor of L-lysine and an essential component of the bacterial peptidoglycan. In Geobacillus thermodenitrificans (strain NG80-2), this protein is Diaminopimelate epimerase.